A 391-amino-acid polypeptide reads, in one-letter code: Succinyl-diaminopimelate desuccinylase (391 aa).

Residue histidine 78 coordinates Zn(2+). Aspartate 80 is an active-site residue. Zn(2+) is bound at residue aspartate 111. Glutamate 145 acts as the Proton acceptor in catalysis. Zn(2+) is bound by residues glutamate 146, glutamate 174, and histidine 360.

Belongs to the peptidase M20A family. DapE subfamily. In terms of assembly, homodimer. Zn(2+) is required as a cofactor. The cofactor is Co(2+).

The enzyme catalyses N-succinyl-(2S,6S)-2,6-diaminopimelate + H2O = (2S,6S)-2,6-diaminopimelate + succinate. It participates in amino-acid biosynthesis; L-lysine biosynthesis via DAP pathway; LL-2,6-diaminopimelate from (S)-tetrahydrodipicolinate (succinylase route): step 3/3. Functionally, catalyzes the hydrolysis of N-succinyl-L,L-diaminopimelic acid (SDAP), forming succinate and LL-2,6-diaminopimelate (DAP), an intermediate involved in the bacterial biosynthesis of lysine and meso-diaminopimelic acid, an essential component of bacterial cell walls. The protein is Succinyl-diaminopimelate desuccinylase of Acidovorax ebreus (strain TPSY) (Diaphorobacter sp. (strain TPSY)).